The primary structure comprises 238 residues: Probable transcriptional regulatory protein SGO_0454 (238 aa).

Belongs to the TACO1 family. YeeN subfamily.

Its subcellular location is the cytoplasm. In Streptococcus gordonii (strain Challis / ATCC 35105 / BCRC 15272 / CH1 / DL1 / V288), this protein is Probable transcriptional regulatory protein SGO_0454.